Here is a 142-residue protein sequence, read N- to C-terminus: Potassium voltage-gated channel subfamily E regulatory beta subunit 5 (142 aa).

Asn2 and Asn25 each carry an N-linked (GlcNAc...) asparagine glycan. Residues 61-81 traverse the membrane as a helical segment; the sequence is LYILLIMIFYACLAGGLILAY. The Cytoplasmic segment spans residues 82 to 142; that stretch reads TRSRKLVEAK…PALAQGAERV (61 aa). The tract at residues 119 to 142 is disordered; it reads SQAEGRRQLASEGLPALAQGAERV.

The protein belongs to the potassium channel KCNE family. As to quaternary structure, interacts with KCNQ1; impairs KCNQ1 localization in lipid rafts and only conducts current upon strong and continued depolarization. In terms of tissue distribution, highly expressed in heart, skeletal muscle, brain, spinal cord and placenta.

It is found in the membrane. In terms of biological role, potassium channel ancillary subunit that is essential for generation of some native K(+) currents by virtue of formation of heteromeric ion channel complex with voltage-gated potassium (Kv) channel pore-forming alpha subunits. Functions as an inhibitory beta-subunit of the repolarizing cardiac potassium ion channel KCNQ1. In Homo sapiens (Human), this protein is Potassium voltage-gated channel subfamily E regulatory beta subunit 5 (KCNE5).